The following is a 424-amino-acid chain: Magnesium-chelatase subunit ChlI-1, chloroplastic (424 aa).

The N-terminal 60 residues, 1–60 (MASLLGTSSSAIWASPSLSSPSSKPSSSPICFRPGKLFGSKLNAGIQIRPKKNRSRYHVS), are a transit peptide targeting the chloroplast. Residue Val-61 is modified to N-acetylvaline. 2 disulfide bridges follow: Cys-102-Cys-193 and Cys-354-Cys-396. 119–126 (GDRGTGKS) is a binding site for ATP. Residue Ser-355 is modified to Phosphoserine.

The protein belongs to the Mg-chelatase subunits D/I family. The magnesium chelatase complex is a heterotrimer consisting of subunits CHLI, CHLD and CHLH. Interacts with CHLH and CHLD.

Its subcellular location is the plastid. It localises to the chloroplast. The enzyme catalyses protoporphyrin IX + Mg(2+) + ATP + H2O = Mg-protoporphyrin IX + ADP + phosphate + 3 H(+). It participates in porphyrin-containing compound metabolism; chlorophyll biosynthesis. With respect to regulation, redox regulation; active in reducing conditions, inactive in oxidizing conditions. Thioredoxins f and m mediate the reversible reductive activation of oxidized CHLI1. Involved in chlorophyll biosynthesis. Catalyzes the insertion of magnesium ion into protoporphyrin IX to yield Mg-protoporphyrin IX. The magnesium-chelatase is a complex of three subunits, CHLI, CHLD and CHLH. The reaction takes place in two steps, with an ATP-dependent activation followed by an ATP-dependent chelation step. Possesses high affinity for ATP and may play a major role in chlorophyll biosynthesis. Does not bind abscisic acid (ABA), but is a positive regulator of ABA signaling. May be involved in ABA signaling in the control of stomatal aperture, but does not seem to have an effect on ABA-induced gene expression. The chain is Magnesium-chelatase subunit ChlI-1, chloroplastic (CHLI1) from Arabidopsis thaliana (Mouse-ear cress).